The primary structure comprises 750 residues: Photosystem I P700 chlorophyll a apoprotein A1 (750 aa).

The next 8 helical transmembrane spans lie at 70 to 93 (VFSA…FHGA), 156 to 179 (LYCT…FHYH), 195 to 219 (LNHH…HVSL), 291 to 309 (IAHH…GHMY), 346 to 369 (WHAQ…HHMY), 385 to 411 (LSLF…IFMV), 433 to 455 (AIIS…LYIH), and 531 to 549 (FLVH…LILL). [4Fe-4S] cluster is bound by residues Cys-573 and Cys-582. Helical transmembrane passes span 589–610 (HVFL…HFSW) and 664–686 (LSAY…MFLF). Chlorophyll a' is bound at residue His-675. Residues Met-683 and Tyr-691 each contribute to the chlorophyll a site. Trp-692 contributes to the phylloquinone binding site. Residues 724-744 (AVGVTHYLLGGIATTWAFFLA) traverse the membrane as a helical segment.

The protein belongs to the PsaA/PsaB family. As to quaternary structure, the PsaA/B heterodimer binds the P700 chlorophyll special pair and subsequent electron acceptors. PSI consists of a core antenna complex that captures photons, and an electron transfer chain that converts photonic excitation into a charge separation. The eukaryotic PSI reaction center is composed of at least 11 subunits. P700 is a chlorophyll a/chlorophyll a' dimer, A0 is one or more chlorophyll a, A1 is one or both phylloquinones and FX is a shared 4Fe-4S iron-sulfur center. is required as a cofactor.

Its subcellular location is the plastid. It is found in the chloroplast thylakoid membrane. The enzyme catalyses reduced [plastocyanin] + hnu + oxidized [2Fe-2S]-[ferredoxin] = oxidized [plastocyanin] + reduced [2Fe-2S]-[ferredoxin]. In terms of biological role, psaA and PsaB bind P700, the primary electron donor of photosystem I (PSI), as well as the electron acceptors A0, A1 and FX. PSI is a plastocyanin-ferredoxin oxidoreductase, converting photonic excitation into a charge separation, which transfers an electron from the donor P700 chlorophyll pair to the spectroscopically characterized acceptors A0, A1, FX, FA and FB in turn. Oxidized P700 is reduced on the lumenal side of the thylakoid membrane by plastocyanin. This is Photosystem I P700 chlorophyll a apoprotein A1 from Lepidium virginicum (Virginia pepperweed).